Here is a 477-residue protein sequence, read N- to C-terminus: UDP-N-acetylmuramate--L-alanine ligase (477 aa).

An ATP-binding site is contributed by 118–124; sequence GTHGKTS.

It belongs to the MurCDEF family.

Its subcellular location is the cytoplasm. It catalyses the reaction UDP-N-acetyl-alpha-D-muramate + L-alanine + ATP = UDP-N-acetyl-alpha-D-muramoyl-L-alanine + ADP + phosphate + H(+). The protein operates within cell wall biogenesis; peptidoglycan biosynthesis. Cell wall formation. This chain is UDP-N-acetylmuramate--L-alanine ligase, found in Corynebacterium diphtheriae (strain ATCC 700971 / NCTC 13129 / Biotype gravis).